The sequence spans 129 residues: Follitropin subunit beta (129 aa).

The first 20 residues, 1 to 20 (MKSLQFCFLFCCWKAICCNS), serve as a signal peptide directing secretion. 6 disulfides stabilise this stretch: cysteine 21/cysteine 69, cysteine 35/cysteine 84, cysteine 38/cysteine 122, cysteine 46/cysteine 100, cysteine 50/cysteine 102, and cysteine 105/cysteine 112. Residues asparagine 25 and asparagine 42 are each glycosylated (N-linked (GlcNAc...) asparagine).

Belongs to the glycoprotein hormones subunit beta family. As to quaternary structure, heterodimer. The active follitropin is a heterodimer composed of an alpha chain/CGA shared with other hormones and a unique beta chain/FSHB shown here.

It is found in the secreted. In terms of biological role, together with the alpha chain CGA constitutes follitropin, the follicle-stimulating hormone, and provides its biological specificity to the hormone heterodimer. Binds FSHR, a G protein-coupled receptor, on target cells to activate downstream signaling pathways. Follitropin is involved in follicle development and spermatogenesis in reproductive organs. The sequence is that of Follitropin subunit beta (FSHB) from Sus scrofa (Pig).